The chain runs to 212 residues: MRRVLLCFLTLILLLPAASALRNPSAVYCEAMGYNYVIFSSPYGDVGKCVLPNGEAVNAWDFYRGVVALEYSYCAKQGYEAKHVEREDCKSCLVCVLPDGREVEVAELMGLSFEETTCGDGVCGIPENYSSCPQDCSSGEEDGYCDAVKDGICDPDCTKGEDADCAENLEGGATTVTATTITPSEVKRTPGFEALEVLAALALVLAVSRRRI.

Residues 1–20 (MRRVLLCFLTLILLLPAASA) form the signal peptide.

This is an uncharacterized protein from Archaeoglobus fulgidus (strain ATCC 49558 / DSM 4304 / JCM 9628 / NBRC 100126 / VC-16).